A 206-amino-acid chain; its full sequence is uncharacterized protein (206 aa).

The N-terminal stretch at M1–A22 is a signal peptide. The SH3b domain occupies E23–P89. A helical membrane pass occupies residues I169 to L191.

It to H.influenzae HI_1605.

It localises to the membrane. This is an uncharacterized protein from Escherichia coli O157:H7.